A 593-amino-acid polypeptide reads, in one-letter code: Probable translation initiation factor IF-2 (593 aa).

The tr-type G domain occupies 7–221 (IRTPIVCVMG…VLIGLAQRYM (215 aa)). The tract at residues 16 to 23 (GHVDHGKT) is G1. 16 to 23 (GHVDHGKT) lines the GTP pocket. Residues 41–45 (EITQH) are G2. Residues 77-80 (DTPG) form a G3 region. GTP-binding positions include 77-81 (DTPGH) and 131-134 (NKVD). Positions 131 to 134 (NKVD) are G4. The segment at 199-201 (SAL) is G5.

It belongs to the TRAFAC class translation factor GTPase superfamily. Classic translation factor GTPase family. IF-2 subfamily.

In terms of biological role, function in general translation initiation by promoting the binding of the formylmethionine-tRNA to ribosomes. Seems to function along with eIF-2. In Methanoculleus marisnigri (strain ATCC 35101 / DSM 1498 / JR1), this protein is Probable translation initiation factor IF-2.